The sequence spans 287 residues: MAFMSFINGFSTLFLVALLASSMMAAKGGNFYQDFDVTWGDHRAKIFNGGQLLSLSLDKTSGSGFRSKKEYLFGRIDMQLKLVAGNSAGTVTAYYLSSQGPTHDEIDFEFLGNLSGDPYIVHTNVFTQGKGNREQQFYLWFDPTRNFHTYSVVWNPRQIIFLIDNTPIRVFKNAESIGVPFPKNQPMRIYSSLWNADDWATRGGLVKTDWTKAPFTAYYRNFNAKTCSGACTESFGDGAWQSQELDAHSRRRLRWVQKNFMIYNYCTDLKRFPEGLPKECQRRSRFL.

Positions 1–28 (MAFMSFINGFSTLFLVALLASSMMAAKG) are cleaved as a signal peptide. Residues 29 to 219 (GNFYQDFDVT…WTKAPFTAYY (191 aa)) form the GH16 domain. The active-site Nucleophile is Glu105. Glu109 acts as the Proton donor in catalysis. Glu109 contributes to the xyloglucan binding site. A glycan (N-linked (GlcNAc...) asparagine) is linked at Asn113. Xyloglucan-binding positions include 122-124 (HTN), 132-134 (NRE), 198-199 (DW), and Gly203. 2 disulfides stabilise this stretch: Cys227–Cys231 and Cys266–Cys280. Arg271 serves as a coordination point for xyloglucan.

Belongs to the glycosyl hydrolase 16 family. XTH group 2 subfamily. In terms of processing, contains at least one intrachain disulfide bond essential for its enzymatic activity. Expressed in fruit pulp. Expressed in leaves, flowers, calyces, stems and fruits. Highest expression in leaves and lowest in fruits.

Its subcellular location is the secreted. It localises to the cell wall. The protein localises to the extracellular space. The protein resides in the apoplast. The catalysed reaction is breaks a beta-(1-&gt;4) bond in the backbone of a xyloglucan and transfers the xyloglucanyl segment on to O-4 of the non-reducing terminal glucose residue of an acceptor, which can be a xyloglucan or an oligosaccharide of xyloglucan.. Its function is as follows. Catalyzes xyloglucan endotransglycosylation (XET). Cleaves and religates xyloglucan polymers. Does not catalyze xyloglucan endohydrolysis (XEH). Overexpression in Arabidopsis transgenic plants results in elevated tolerance to abiotic stress, such as salt, ABA (abscisic acid) and drought stresses, and in the production of wider leaves. Overexpression in transgenic tomato plants slows down fruit ripening and softening, and the plants produce larger fruits. Both transgenic plants have larger and more irregular cells. Moreover, the fruits of the transgenic tomato have higher density of cell wall and intercellular spaces. May provide cells with more strength and thickness to maintain structural integrity. Probably involved in cell wall assembly and synthesis in fast growing tissues and in the maintenance of firmness in mature fruits. The polypeptide is Xyloglucan endotransglucosylase protein 1 (Diospyros kaki (Kaki persimmon)).